The following is a 198-amino-acid chain: Glycerol-3-phosphate acyltransferase (198 aa).

Transmembrane regions (helical) follow at residues 1–21, 53–73, 79–99, 111–131, 136–156, and 158–178; these read MNLLILFFGYLFGSFPSGYLA, IIVFLLDVFKGVLSILLAKYL, WQVAIGLSTLIGHIWPVWLNW, IFLGLSWQVGLATLGVFIIMI, IVSLASVSASLALPLIMFLSF, and GSNISLPFLIVSLLAMLLVIW.

It belongs to the PlsY family. In terms of assembly, probably interacts with PlsX.

Its subcellular location is the cell inner membrane. It catalyses the reaction an acyl phosphate + sn-glycerol 3-phosphate = a 1-acyl-sn-glycero-3-phosphate + phosphate. The protein operates within lipid metabolism; phospholipid metabolism. Functionally, catalyzes the transfer of an acyl group from acyl-phosphate (acyl-PO(4)) to glycerol-3-phosphate (G3P) to form lysophosphatidic acid (LPA). This enzyme utilizes acyl-phosphate as fatty acyl donor, but not acyl-CoA or acyl-ACP. This Prochlorococcus marinus (strain NATL1A) protein is Glycerol-3-phosphate acyltransferase.